Here is a 407-residue protein sequence, read N- to C-terminus: Large ribosomal subunit protein uL4y (407 aa).

Residues 57–96 (PYAVSKKAGHQTSAESWGTGRAVSRIPRVPGGGTHRAGQA) are disordered.

It belongs to the universal ribosomal protein uL4 family.

This chain is Large ribosomal subunit protein uL4y (RPL4D), found in Arabidopsis thaliana (Mouse-ear cress).